The sequence spans 351 residues: Protein Wnt-2b-A (351 aa).

The N-terminal stretch at 1–16 is a signal peptide; that stretch reads MHFAYILILLILTPRV. 11 cysteine pairs are disulfide-bonded: Cys67-Cys78, Cys118-Cys126, Cys128-Cys148, Cys197-Cys211, Cys199-Cys206, Cys269-Cys300, Cys285-Cys295, Cys299-Cys339, Cys315-Cys330, Cys317-Cys327, and Cys322-Cys323. Asn77 carries N-linked (GlcNAc...) asparagine glycosylation. A lipid anchor (O-palmitoleoyl serine; by PORCN) is attached at Ser203.

This sequence belongs to the Wnt family. Post-translationally, palmitoleoylation is required for efficient binding to frizzled receptors. Depalmitoleoylation leads to Wnt signaling pathway inhibition. As to expression, expressed maternally in both vegetal and animal blastomeres with enrichment in the animal hemisphere. Expressed zygotically near the prosencephalic-mesencephalic boundary of the developing brain in neurula and tailbud stages, and also in non-brain areas at tadpole stages.

It is found in the secreted. Its subcellular location is the extracellular space. It localises to the extracellular matrix. Its function is as follows. Ligand for members of the frizzled family of seven transmembrane receptors. Functions in the canonical Wnt/beta-catenin signaling pathway. The polypeptide is Protein Wnt-2b-A (wnt2b-a) (Xenopus laevis (African clawed frog)).